The chain runs to 930 residues: Translation initiation factor IF-2 (930 aa).

Residues 31 to 317 (FVKSASSTVE…RKSKRAKRAE (287 aa)) form a disordered region. Residues 61–78 (PAAGASNGAPAKPSAPGA) show a composition bias toward low complexity. Composition is skewed to pro residues over residues 79 to 99 (RPGPRPGPPAPAQPKEPPAPA) and 108 to 120 (PAAPAPPAAPPAP). The segment covering 121 to 135 (AASAAPPSAPEAPSA) has biased composition (low complexity). 2 stretches are compositionally biased toward pro residues: residues 136–158 (RPTPGPRPGPGGPKPGAPKPAPR) and 178–192 (PRPQGPAGPGGPRPG). The span at 193–205 (PGAGGPRPGGGPR) shows a compositional bias: gly residues. Positions 212-242 (NMPPRPVGGPRPGGGPRPGGGPRPGAGPRPT) are enriched in pro residues. Positions 244–301 (GGAGRPGGGGGGNYRGGGAGGGGGAGGAAAGGFRGRPGGGGGRPGQRGGAAGAFGRPG) are enriched in gly residues. Positions 305–314 (KRGRKSKRAK) are enriched in basic residues. Residues 426-598 (FRPPVVTVMG…VVLTADASLD (173 aa)) enclose the tr-type G domain. The segment at 435–442 (GHVDHGKT) is G1. 435-442 (GHVDHGKT) contacts GTP. Residues 460 to 464 (GITQH) form a G2 region. Residues 485 to 488 (DTPG) form a G3 region. Residues 485–489 (DTPGH) and 539–542 (NKID) each bind GTP. Residues 539–542 (NKID) are G4. The segment at 575–577 (SAK) is G5.

This sequence belongs to the TRAFAC class translation factor GTPase superfamily. Classic translation factor GTPase family. IF-2 subfamily.

Its subcellular location is the cytoplasm. In terms of biological role, one of the essential components for the initiation of protein synthesis. Protects formylmethionyl-tRNA from spontaneous hydrolysis and promotes its binding to the 30S ribosomal subunits. Also involved in the hydrolysis of GTP during the formation of the 70S ribosomal complex. This chain is Translation initiation factor IF-2, found in Mycolicibacterium gilvum (strain PYR-GCK) (Mycobacterium gilvum (strain PYR-GCK)).